We begin with the raw amino-acid sequence, 222 residues long: Transmembrane protein 114 (222 aa).

The helical transmembrane segment at 7 to 27 (ALAGAAALSGALSFVLLAAAI) threads the bilayer. Asn-54 and Asn-88 each carry an N-linked (GlcNAc...) asparagine glycan. Helical transmembrane passes span 105 to 125 (FVILLPLSLIVMVFGGMTGFL), 133 to 153 (LLLLLTGILFLFGAMVTLTGI), and 188 to 208 (LALGWISFVSELLTGVVFLAA).

It is found in the cell junction. The protein localises to the tight junction. It localises to the lateral cell membrane. The protein resides in the apical cell membrane. The polypeptide is Transmembrane protein 114 (Mus musculus (Mouse)).